Reading from the N-terminus, the 776-residue chain is 1,4-alpha-glucan branching enzyme GlgB (776 aa).

Residue Asp431 is the Nucleophile of the active site. The active-site Proton donor is the Glu484.

This sequence belongs to the glycosyl hydrolase 13 family. GlgB subfamily. In terms of assembly, monomer.

It catalyses the reaction Transfers a segment of a (1-&gt;4)-alpha-D-glucan chain to a primary hydroxy group in a similar glucan chain.. The protein operates within glycan biosynthesis; glycogen biosynthesis. In terms of biological role, catalyzes the formation of the alpha-1,6-glucosidic linkages in glycogen by scission of a 1,4-alpha-linked oligosaccharide from growing alpha-1,4-glucan chains and the subsequent attachment of the oligosaccharide to the alpha-1,6 position. This is 1,4-alpha-glucan branching enzyme GlgB from Trichodesmium erythraeum (strain IMS101).